Consider the following 500-residue polypeptide: MGNLRFYNTLTRKKEDFIPIDSSKVRLYVCGPTVYDYAHIGNARPVIVFDILFRLLRHVYGKDHVIYARNVTDVDDKINARAIREYPKLTLNDAIHQLTERTYDQFQQDTEALGCLLPTYQPRATDHLEEMRSLIERLLEKGHAYIAENHVLFSVNSIKNNPLYGVFAKRSLNEMKAGARVDVAPYKRDDMDFVLWKPSTQQEPGWKSPAGISVLGRPGWHIECSAMSMAKLLTPYGGGLACDDLSVNVFDIHGGGIDLIFPHHENEIAQSCSVFGTERMANFWMHNGFLQVEGRKMSKSFGNFITIRSILESNFVEFSNAMTDDLKQSWAGLSARFSMLQTHYREPLNWTAQRLAQSSSELYRWYELLRCERSCLDNGGVIDASLISTLSDDLNTPNSFTLLRKFYKEENAVALVQGMDLFGLLRQEWVREIECPLFVKGIDLDSKFIDQRIAERLLFIQNKEWAAADEIRNELAKKGIALKDEKDSQTGERITTWEVK.

Residue Cys30 participates in Zn(2+) binding. The 'HIGH' region signature appears at 32–42; it reads PTVYDYAHIGN. Zn(2+) is bound by residues Cys224, His263, and Glu267. The 'KMSKS' region signature appears at 296 to 300; that stretch reads KMSKS. ATP is bound at residue Lys299.

This sequence belongs to the class-I aminoacyl-tRNA synthetase family. In terms of assembly, monomer. Zn(2+) serves as cofactor.

It localises to the cytoplasm. It catalyses the reaction tRNA(Cys) + L-cysteine + ATP = L-cysteinyl-tRNA(Cys) + AMP + diphosphate. The protein is Cysteine--tRNA ligase of Bartonella bacilliformis (strain ATCC 35685 / KC583 / Herrer 020/F12,63).